A 451-amino-acid polypeptide reads, in one-letter code: Tubulin alpha chain (451 aa).

Gln11 serves as a coordination point for GTP. N6-acetyllysine is present on Lys40. Residues Glu71, Gly144, Thr145, Thr179, Asn206, and Asn228 each coordinate GTP. Mg(2+) is bound at residue Glu71. Residue Glu254 is part of the active site. Positions 432–451 (YEEVGAESAEGDDEDEGEDY) are disordered.

Belongs to the tubulin family. As to quaternary structure, dimer of alpha and beta chains. A typical microtubule is a hollow water-filled tube with an outer diameter of 25 nm and an inner diameter of 15 nM. Alpha-beta heterodimers associate head-to-tail to form protofilaments running lengthwise along the microtubule wall with the beta-tubulin subunit facing the microtubule plus end conferring a structural polarity. Microtubules usually have 13 protofilaments but different protofilament numbers can be found in some organisms and specialized cells. Requires Mg(2+) as cofactor. In terms of processing, undergoes a tyrosination/detyrosination cycle, the cyclic removal and re-addition of a C-terminal tyrosine residue by the enzymes tubulin tyrosine carboxypeptidase (TTCP) and tubulin tyrosine ligase (TTL), respectively. Post-translationally, acetylation of alpha chains at Lys-40 stabilizes microtubules and affects affinity and processivity of microtubule motors. This modification has a role in multiple cellular functions, ranging from cell motility, cell cycle progression or cell differentiation to intracellular trafficking and signaling.

It localises to the cytoplasm. It is found in the cytoskeleton. It catalyses the reaction GTP + H2O = GDP + phosphate + H(+). Its function is as follows. Tubulin is the major constituent of microtubules, a cylinder consisting of laterally associated linear protofilaments composed of alpha- and beta-tubulin heterodimers. Microtubules grow by the addition of GTP-tubulin dimers to the microtubule end, where a stabilizing cap forms. Below the cap, tubulin dimers are in GDP-bound state, owing to GTPase activity of alpha-tubulin. This chain is Tubulin alpha chain (TBA), found in Daucus carota (Wild carrot).